The following is a 572-amino-acid chain: uncharacterized protein (572 aa).

A disordered region spans residues 13–45 (ALIAKPKGKTVSGDGADPKKRGRPKKNATEPAV). Residues 177–204 (VLTKEMEEKLEALDRDMRTAEETKVSIA) are a coiled coil.

This is an uncharacterized protein from Dryophytes versicolor (chameleon treefrog).